A 275-amino-acid chain; its full sequence is Fructose-2,6-bisphosphatase TIGAR (275 aa).

The Tele-phosphohistidine intermediate role is filled by His11. Glu89 functions as the Proton donor/acceptor in the catalytic mechanism.

It belongs to the phosphoglycerate mutase family.

The protein localises to the cytoplasm. Its subcellular location is the nucleus. The protein resides in the mitochondrion. The catalysed reaction is beta-D-fructose 2,6-bisphosphate + H2O = beta-D-fructose 6-phosphate + phosphate. Fructose-bisphosphatase hydrolyzing fructose-2,6-bisphosphate as well as fructose-1,6-bisphosphate. Acts as a negative regulator of glycolysis by lowering intracellular levels of fructose-2,6-bisphosphate in a p53/TP53-dependent manner, resulting in the pentose phosphate pathway (PPP) activation and NADPH production. Contributes to the generation of reduced glutathione to cause a decrease in intracellular reactive oxygen species (ROS) content, correlating with its ability to protect cells from oxidative or metabolic stress-induced cell death. May play a role in mitophagy inhibition. The sequence is that of Fructose-2,6-bisphosphatase TIGAR from Xenopus laevis (African clawed frog).